Consider the following 146-residue polypeptide: Large ribosomal subunit protein uL15 (146 aa).

The tract at residues 1-56 (MKLHELRAAEGANKASKRVGRGTGSGLGKTSGKGQNGQNSRSGGGVRPGFEGGQMP) is disordered. Gly residues-rich tracts occupy residues 21-35 (RGTGSGLGKTSGKGQ) and 42-52 (SGGGVRPGFEG).

Belongs to the universal ribosomal protein uL15 family. In terms of assembly, part of the 50S ribosomal subunit.

Its function is as follows. Binds to the 23S rRNA. In Clostridium botulinum (strain Loch Maree / Type A3), this protein is Large ribosomal subunit protein uL15.